We begin with the raw amino-acid sequence, 137 residues long: Cellular retinoic acid-binding protein 1 (137 aa).

A Nuclear localization signal motif is present at residues 21–31 (KALGVNAMLRK). 132–134 (RIY) is a binding site for all-trans-retinoate.

This sequence belongs to the calycin superfamily. Fatty-acid binding protein (FABP) family.

The protein localises to the cytoplasm. Its function is as follows. Cytosolic CRABPs may regulate the access of retinoic acid to the nuclear retinoic acid receptors. The polypeptide is Cellular retinoic acid-binding protein 1 (CRABP1) (Gallus gallus (Chicken)).